The following is a 66-amino-acid chain: Large ribosomal subunit protein bL35c (66 aa).

This sequence belongs to the bacterial ribosomal protein bL35 family.

The protein resides in the plastid. The protein localises to the chloroplast. This is Large ribosomal subunit protein bL35c from Gracilaria tenuistipitata var. liui (Red alga).